The following is a 419-amino-acid chain: MAGTFGRLLAGRVTAALFAAAGSGVLTTGYLLNQQNVKATVHEKRKLFPPSADYPDLRKHNNCMAECLTPAIYAKLRDKLTPNGYSLDQCIQTGVDNPGHPFIKTVGMVAGDEESYEVFAEIFDPVIKARHNGYDPRTMKHHTDLDASKITHGQFDERYVLSSRVRTGRSIRGLSLPPACSRAERREVENVVVTALAGLKGDLSGKYYSLTNMSERDQQQLIDDHFLFDKPVSPLLTCAGMARDWPDARGIWHNNDKTFLVWINEEDHTRVISMEKGGNMKRVFERFCRGLKEVERLIKERGWEFMWNERLGYVLTCPSNLGTGLRAGVHVKLPRLSKDPRFPKILENLRLQKRGTGGVDTAAVADVYDISNLDRMGRSEVELVQIVIDGVNYLVDCEKKLEKGQDIKVPPPLPQFGRK.

The transit peptide at 1–39 (MAGTFGRLLAGRVTAALFAAAGSGVLTTGYLLNQQNVKA) directs the protein to the mitochondrion. Residues 46 to 132 (KLFPPSADYP…FDPVIKARHN (87 aa)) enclose the Phosphagen kinase N-terminal domain. Residues 159 to 401 (YVLSSRVRTG…NYLVDCEKKL (243 aa)) form the Phosphagen kinase C-terminal domain. ATP is bound by residues 162-166 (SSRVR), His-225, Arg-270, Arg-326, 354-359 (RGTGGV), and Asp-369.

It belongs to the ATP:guanido phosphotransferase family. In terms of assembly, exists as an octamer composed of four MTCK homodimers. As to expression, expressed in the leg muscle and heart.

The protein localises to the mitochondrion inner membrane. The enzyme catalyses creatine + ATP = N-phosphocreatine + ADP + H(+). Its function is as follows. Reversibly catalyzes the transfer of phosphate between ATP and various phosphogens (e.g. creatine phosphate). Creatine kinase isoenzymes play a central role in energy transduction in tissues with large, fluctuating energy demands, such as skeletal muscle, heart, brain and spermatozoa. The protein is Creatine kinase S-type, mitochondrial (CKMT2) of Gallus gallus (Chicken).